The following is a 149-amino-acid chain: Large-conductance mechanosensitive channel (149 aa).

3 helical membrane passes run 16 to 36 (VMDL…VNSV), 40 to 60 (LIMP…KFIL), and 89 to 109 (GSFI…FMMV).

This sequence belongs to the MscL family. Homopentamer.

It is found in the cell inner membrane. Its function is as follows. Channel that opens in response to stretch forces in the membrane lipid bilayer. May participate in the regulation of osmotic pressure changes within the cell. This chain is Large-conductance mechanosensitive channel, found in Paraburkholderia phymatum (strain DSM 17167 / CIP 108236 / LMG 21445 / STM815) (Burkholderia phymatum).